The following is a 158-amino-acid chain: Glycine/sarcosine/betaine reductase complex component A (158 aa).

Residue Sec44 is part of the active site. Sec44 is a non-standard amino acid (selenocysteine).

It belongs to the GrdA family. Monomer. Component of the glycine, sarcosine and betaine reductase complexes, together with components B and C.

The enzyme catalyses acetyl phosphate + [thioredoxin]-disulfide + NH4(+) + H2O = [thioredoxin]-dithiol + glycine + phosphate + H(+). The catalysed reaction is acetyl phosphate + methylamine + [thioredoxin]-disulfide + H2O = sarcosine + [thioredoxin]-dithiol + phosphate + H(+). It catalyses the reaction acetyl phosphate + trimethylamine + [thioredoxin]-disulfide + H2O = glycine betaine + [thioredoxin]-dithiol + phosphate + H(+). In terms of biological role, in the first step of glycine, betaine and sarcosine reductases, the substrate is bound to component PB via a Schiff base intermediate. Then the PB-activated substrate is nucleophilically attacked by the selenol anion of component PA to transform it to a carboxymethylated selenoether and the respective amine. By action of component PC, acetyl phosphate is formed, leaving component PA in its oxidized state. Finally component PA becomes reduced by the thioredoxin system to start a new catalytic cycle of reductive deamination. This Alkaliphilus metalliredigens (strain QYMF) protein is Glycine/sarcosine/betaine reductase complex component A.